The chain runs to 790 residues: Probable copper-transporting ATPase SynA (790 aa).

The Cytoplasmic segment spans residues Met1–Gln105. The HMA domain maps to Thr14–Gln81. Residues Cys25 and Cys28 each coordinate Cu cation. A helical membrane pass occupies residues Leu106–Leu125. Residues Asp126–Gln134 lie on the Extracellular side of the membrane. A helical membrane pass occupies residues Leu135–Leu154. At Gln155–Pro166 the chain is on the cytoplasmic side. Residues Asn167–Trp189 form a helical membrane-spanning segment. Over Pro190–Gly193 the chain is Extracellular. A helical membrane pass occupies residues Trp194–Gly211. Over Arg212–Asp357 the chain is Cytoplasmic. Residues Ala358 to Thr380 form a helical membrane-spanning segment. Topologically, residues Leu381–Pro416 are extracellular. The helical transmembrane segment at Leu417–Ala439 threads the bilayer. Over Thr440–Asn726 the chain is Cytoplasmic. Asp476 serves as the catalytic 4-aspartylphosphate intermediate. The Mg(2+) site is built by Asp669 and Asp673. The helical transmembrane segment at Leu727 to Tyr749 threads the bilayer. Topologically, residues Gly750–Leu753 are extracellular. Residues Thr754–Leu776 form a helical membrane-spanning segment. The Cytoplasmic portion of the chain corresponds to Arg777–Val790.

The protein belongs to the cation transport ATPase (P-type) (TC 3.A.3) family. Type IB subfamily.

The protein resides in the cell membrane. The catalysed reaction is Cu(2+)(in) + ATP + H2O = Cu(2+)(out) + ADP + phosphate + H(+). Involved in copper transport. This chain is Probable copper-transporting ATPase SynA (synA), found in Synechococcus sp. (strain ATCC 27144 / PCC 6301 / SAUG 1402/1) (Anacystis nidulans).